Here is a 166-residue protein sequence, read N- to C-terminus: Endoribonuclease YbeY (166 aa).

3 residues coordinate Zn(2+): His132, His136, and His142.

It belongs to the endoribonuclease YbeY family. The cofactor is Zn(2+).

The protein localises to the cytoplasm. Its function is as follows. Single strand-specific metallo-endoribonuclease involved in late-stage 70S ribosome quality control and in maturation of the 3' terminus of the 16S rRNA. This Clostridium botulinum (strain Alaska E43 / Type E3) protein is Endoribonuclease YbeY.